The primary structure comprises 158 residues: Pleckstrin homology domain-containing family J member 1 (158 aa).

Residues 15–108 (PTQRAAELGM…WIDAIIKASY (94 aa)) form the PH domain.

The chain is Pleckstrin homology domain-containing family J member 1 (plekhj1) from Danio rerio (Zebrafish).